The sequence spans 127 residues: Small ribosomal subunit protein eS8 (127 aa).

The protein belongs to the eukaryotic ribosomal protein eS8 family. In terms of assembly, part of the 30S ribosomal subunit.

The polypeptide is Small ribosomal subunit protein eS8 (Nanoarchaeum equitans (strain Kin4-M)).